A 93-amino-acid chain; its full sequence is Small ribosomal subunit protein uS19 (93 aa).

This sequence belongs to the universal ribosomal protein uS19 family.

Functionally, protein S19 forms a complex with S13 that binds strongly to the 16S ribosomal RNA. In Helicobacter acinonychis (strain Sheeba), this protein is Small ribosomal subunit protein uS19.